Here is a 780-residue protein sequence, read N- to C-terminus: LPS-assembly protein LptD (780 aa).

Residues 1–24 form the signal peptide; it reads MKKRFPTLLATLIWTALYSQHTLA.

It belongs to the LptD family. Component of the lipopolysaccharide transport and assembly complex. Interacts with LptE and LptA.

It localises to the cell outer membrane. Functionally, together with LptE, is involved in the assembly of lipopolysaccharide (LPS) at the surface of the outer membrane. The protein is LPS-assembly protein LptD of Yersinia pestis bv. Antiqua (strain Antiqua).